A 501-amino-acid polypeptide reads, in one-letter code: Glycerol kinase 1 (501 aa).

An ADP-binding site is contributed by threonine 16. ATP-binding residues include threonine 16, threonine 17, and serine 18. Sn-glycerol 3-phosphate is bound at residue threonine 16. Residue arginine 20 coordinates ADP. The sn-glycerol 3-phosphate site is built by arginine 84, glutamate 85, tyrosine 135, and aspartate 242. Positions 84, 85, 135, 242, and 243 each coordinate glycerol. Residues threonine 264 and glycine 307 each contribute to the ADP site. ATP contacts are provided by threonine 264, glycine 307, glutamine 311, and glycine 408. Glycine 408 lines the ADP pocket.

Belongs to the FGGY kinase family.

It carries out the reaction glycerol + ATP = sn-glycerol 3-phosphate + ADP + H(+). It participates in polyol metabolism; glycerol degradation via glycerol kinase pathway; sn-glycerol 3-phosphate from glycerol: step 1/1. In terms of biological role, key enzyme in the regulation of glycerol uptake and metabolism. Catalyzes the phosphorylation of glycerol to yield sn-glycerol 3-phosphate. This is Glycerol kinase 1 from Saccharolobus solfataricus (strain ATCC 35092 / DSM 1617 / JCM 11322 / P2) (Sulfolobus solfataricus).